Consider the following 146-residue polypeptide: Phage-like element PBSX protein XkdJ (146 aa).

It to B.subtilis YqbJ.

The polypeptide is Phage-like element PBSX protein XkdJ (xkdJ) (Bacillus subtilis (strain 168)).